Here is a 99-residue protein sequence, read N- to C-terminus: A-type ATP synthase subunit F (99 aa).

It belongs to the V-ATPase F subunit family. As to quaternary structure, has multiple subunits with at least A(3), B(3), C, D, E, F, H, I and proteolipid K(x).

The protein resides in the cell membrane. Component of the A-type ATP synthase that produces ATP from ADP in the presence of a proton gradient across the membrane. In Methanococcus maripaludis (strain DSM 14266 / JCM 13030 / NBRC 101832 / S2 / LL), this protein is A-type ATP synthase subunit F.